A 352-amino-acid polypeptide reads, in one-letter code: DNA polymerase IV (352 aa).

Positions 6–186 constitute a UmuC domain; sequence IIHIDMDAFY…LPLGKIPGAG (181 aa). Mg(2+) is bound by residues Asp10 and Asp104. Glu105 is a catalytic residue.

This sequence belongs to the DNA polymerase type-Y family. In terms of assembly, monomer. The cofactor is Mg(2+).

Its subcellular location is the cytoplasm. The catalysed reaction is DNA(n) + a 2'-deoxyribonucleoside 5'-triphosphate = DNA(n+1) + diphosphate. Its function is as follows. Poorly processive, error-prone DNA polymerase involved in untargeted mutagenesis. Copies undamaged DNA at stalled replication forks, which arise in vivo from mismatched or misaligned primer ends. These misaligned primers can be extended by PolIV. Exhibits no 3'-5' exonuclease (proofreading) activity. May be involved in translesional synthesis, in conjunction with the beta clamp from PolIII. This chain is DNA polymerase IV, found in Neisseria gonorrhoeae (strain ATCC 700825 / FA 1090).